Consider the following 325-residue polypeptide: Fructose-1,6-bisphosphatase class 1 (325 aa).

The Mg(2+) site is built by Glu-84, Asp-103, Leu-105, and Asp-106. Substrate contacts are provided by residues 106–109, Asn-196, and Lys-262; that span reads DGSS. Glu-268 is a binding site for Mg(2+).

The protein belongs to the FBPase class 1 family. As to quaternary structure, homotetramer. Mg(2+) serves as cofactor.

The protein localises to the cytoplasm. The enzyme catalyses beta-D-fructose 1,6-bisphosphate + H2O = beta-D-fructose 6-phosphate + phosphate. Its pathway is carbohydrate biosynthesis; gluconeogenesis. This chain is Fructose-1,6-bisphosphatase class 1, found in Shewanella baltica (strain OS195).